A 245-amino-acid polypeptide reads, in one-letter code: 3-deoxy-manno-octulosonate cytidylyltransferase (245 aa).

Belongs to the KdsB family.

It localises to the cytoplasm. It carries out the reaction 3-deoxy-alpha-D-manno-oct-2-ulosonate + CTP = CMP-3-deoxy-beta-D-manno-octulosonate + diphosphate. It participates in nucleotide-sugar biosynthesis; CMP-3-deoxy-D-manno-octulosonate biosynthesis; CMP-3-deoxy-D-manno-octulosonate from 3-deoxy-D-manno-octulosonate and CTP: step 1/1. Its pathway is bacterial outer membrane biogenesis; lipopolysaccharide biosynthesis. In terms of biological role, activates KDO (a required 8-carbon sugar) for incorporation into bacterial lipopolysaccharide in Gram-negative bacteria. The polypeptide is 3-deoxy-manno-octulosonate cytidylyltransferase (Acidobacterium capsulatum (strain ATCC 51196 / DSM 11244 / BCRC 80197 / JCM 7670 / NBRC 15755 / NCIMB 13165 / 161)).